Here is a 202-residue protein sequence, read N- to C-terminus: Urease accessory protein UreG (202 aa).

A GTP-binding site is contributed by 10-17 (GPVGSGKT).

Belongs to the SIMIBI class G3E GTPase family. UreG subfamily. Homodimer. UreD, UreF and UreG form a complex that acts as a GTP-hydrolysis-dependent molecular chaperone, activating the urease apoprotein by helping to assemble the nickel containing metallocenter of UreC. The UreE protein probably delivers the nickel.

It is found in the cytoplasm. Facilitates the functional incorporation of the urease nickel metallocenter. This process requires GTP hydrolysis, probably effectuated by UreG. The protein is Urease accessory protein UreG of Synechococcus sp. (strain JA-3-3Ab) (Cyanobacteria bacterium Yellowstone A-Prime).